The primary structure comprises 386 residues: Caspase-1-A (386 aa).

Positions 1-100 are excised as a propeptide; the sequence is MTAQLNKVRR…PPMAPVPIQE (100 aa). A CARD domain is found at 22–88; sequence SDLLDDLREK…HKTLAKSLGL (67 aa). Catalysis depends on residues H218 and C274. A propeptide spanning residues 287–296 is cleaved from the precursor; sequence DVASPPLEDD.

Belongs to the peptidase C14A family. As to quaternary structure, heterotetramer that consists of two anti-parallel arranged heterodimers, each one formed by a 20 kDa (Caspase-1 subunit p20) and a 10 kDa (Caspase-1 subunit p10) subunit. Heterotetramer that consists of two anti-parallel arranged heterodimers, each one formed by a 20 kDa (Caspase-1 subunit p20) and a 10 kDa (Caspase-1 subunit p10) subunit. Can form a heterodimer with isoform epsilon which then has an inhibitory effect. The two subunits are derived from the precursor sequence by an autocatalytic mechanism.

It localises to the cytoplasm. It is found in the cell membrane. It catalyses the reaction Strict requirement for an Asp residue at position P1 and has a preferred cleavage sequence of Tyr-Val-Ala-Asp-|-.. Functionally, thiol protease involved in a variety of inflammatory processes by proteolytically cleaving other proteins, such as the precursors of the inflammatory cytokines interleukin-1 beta (IL1B) and interleukin 18 (IL18) as well as the pyroptosis inducer Gasdermin-D (GSDMD), into active mature peptides. Plays a key role in cell immunity as an inflammatory response initiator: once activated through formation of an inflammasome complex, it initiates a pro-inflammatory response through the cleavage of the two inflammatory cytokines IL1B and IL18, releasing the mature cytokines which are involved in a variety of inflammatory processes. Cleaves a tetrapeptide after an Asp residue at position P1. Also initiates pyroptosis, a programmed lytic cell death pathway, through cleavage of GSDMD. The protein is Caspase-1-A (casp1-a) of Xenopus laevis (African clawed frog).